The chain runs to 253 residues: MSQTPMPQPDQAPPVDVGQPVDEAEAKRRRFKTHGRKKGKVNDTRLARIEAGLLALSLPPGSADRGALIDQLGGNGQSQRVILEIGFGNGETLAALAARHPEDCFIGIDVFLEGFGTLLNRLTRGDISNVRLVCQNALQVLLERIPDASLDGVIINFPDPWRKKRHFKRRIVQTEFLDALAPKMRSGADLTLATDWANYAEWMVAHLEPHTAFVNQAEPGPFAAPPPWWIETNFERKGVAAGRIIRHLHYKKR.

Positions 1–12 are enriched in pro residues; it reads MSQTPMPQPDQA. The segment at 1-39 is disordered; the sequence is MSQTPMPQPDQAPPVDVGQPVDEAEAKRRRFKTHGRKKG. A compositionally biased stretch (basic residues) spans 27–39; the sequence is KRRRFKTHGRKKG. The S-adenosyl-L-methionine site is built by glutamate 84, aspartate 109, asparagine 136, and aspartate 159. Residue aspartate 159 is part of the active site. Residues lysine 163, aspartate 195, and 232-235 each bind substrate; that span reads TNFE.

It belongs to the class I-like SAM-binding methyltransferase superfamily. TrmB family.

The enzyme catalyses guanosine(46) in tRNA + S-adenosyl-L-methionine = N(7)-methylguanosine(46) in tRNA + S-adenosyl-L-homocysteine. It participates in tRNA modification; N(7)-methylguanine-tRNA biosynthesis. In terms of biological role, catalyzes the formation of N(7)-methylguanine at position 46 (m7G46) in tRNA. The sequence is that of tRNA (guanine-N(7)-)-methyltransferase from Magnetococcus marinus (strain ATCC BAA-1437 / JCM 17883 / MC-1).